The chain runs to 470 residues: Sugar transporter ERD6-like 8 (470 aa).

Residues 1-16 (METRKDDMEKRNDKSE) show a composition bias toward basic and acidic residues. The disordered stretch occupies residues 1–24 (METRKDDMEKRNDKSEPLLLPENG). Transmembrane regions (helical) follow at residues 33–53 (WMVYLSTIIAVCGSYEFGTCV), 73–93 (QFSVFGSILNMGAVLGAITSG), 110–130 (VISAIGWLIIYLAKGDVPLDF), 133–153 (FLTGYGCGTLSFVVPVFIAEI), 164–184 (TLNQLFIVIGLASMFLIGAVV), 188–208 (TLALTGVAPCVVLFFGTWFIP), 270–290 (FVIVGVGLMFFQQFVGINGVI), 307–327 (GSILYSIEQVVLTALGATLLI), 335–355 (LLMASAVGMLIGCLLIGNSFL), 373–393 (GVLVYIGSFSIGMGAIPWVIM), 409–429 (VTVVNWLSSWLVSFTFNFLMI), and 434–454 (GTFYVYGGVCVLAIIFIAKLV).

It belongs to the major facilitator superfamily. Sugar transporter (TC 2.A.1.1) family.

It localises to the membrane. Sugar transporter. The chain is Sugar transporter ERD6-like 8 from Arabidopsis thaliana (Mouse-ear cress).